A 318-amino-acid polypeptide reads, in one-letter code: Aspartate carbamoyltransferase catalytic subunit (318 aa).

Carbamoyl phosphate contacts are provided by Arg59 and Thr60. Lys87 contacts L-aspartate. Carbamoyl phosphate contacts are provided by Arg109, His137, and Gln140. L-aspartate-binding residues include Arg170 and Arg224. Carbamoyl phosphate-binding residues include Gly265 and Pro266.

It belongs to the aspartate/ornithine carbamoyltransferase superfamily. ATCase family. In terms of assembly, heterododecamer (2C3:3R2) of six catalytic PyrB chains organized as two trimers (C3), and six regulatory PyrI chains organized as three dimers (R2).

It carries out the reaction carbamoyl phosphate + L-aspartate = N-carbamoyl-L-aspartate + phosphate + H(+). The protein operates within pyrimidine metabolism; UMP biosynthesis via de novo pathway; (S)-dihydroorotate from bicarbonate: step 2/3. Catalyzes the condensation of carbamoyl phosphate and aspartate to form carbamoyl aspartate and inorganic phosphate, the committed step in the de novo pyrimidine nucleotide biosynthesis pathway. This is Aspartate carbamoyltransferase catalytic subunit from Allorhizobium ampelinum (strain ATCC BAA-846 / DSM 112012 / S4) (Agrobacterium vitis (strain S4)).